The chain runs to 645 residues: Chaperone protein DnaK (645 aa).

Threonine 201 carries the post-translational modification Phosphothreonine; by autocatalysis. Residues 606-629 are compositionally biased toward low complexity; sequence NTNNATAGDNNTTDTGSSSNSDGS. Residues 606-645 form a disordered region; that stretch reads NTNNATAGDNNTTDTGSSSNSDGSKVVDSDYQEIDKKDGK. Over residues 630–645 the composition is skewed to basic and acidic residues; it reads KVVDSDYQEIDKKDGK.

This sequence belongs to the heat shock protein 70 family.

Acts as a chaperone. In Ehrlichia ruminantium (strain Gardel), this protein is Chaperone protein DnaK.